Here is a 425-residue protein sequence, read N- to C-terminus: Glutamyl-tRNA(Gln) amidotransferase subunit A (425 aa).

Active-site charge relay system residues include lysine 29 and serine 104. Serine 128 serves as the catalytic Acyl-ester intermediate.

Belongs to the amidase family. GatA subfamily. As to quaternary structure, heterotrimer of A, B and C subunits.

The catalysed reaction is L-glutamyl-tRNA(Gln) + L-glutamine + ATP + H2O = L-glutaminyl-tRNA(Gln) + L-glutamate + ADP + phosphate + H(+). In terms of biological role, allows the formation of correctly charged Gln-tRNA(Gln) through the transamidation of misacylated Glu-tRNA(Gln) in organisms which lack glutaminyl-tRNA synthetase. The reaction takes place in the presence of glutamine and ATP through an activated gamma-phospho-Glu-tRNA(Gln). This is Glutamyl-tRNA(Gln) amidotransferase subunit A from Haloarcula marismortui (strain ATCC 43049 / DSM 3752 / JCM 8966 / VKM B-1809) (Halobacterium marismortui).